Consider the following 105-residue polypeptide: Urease subunit beta (105 aa).

This sequence belongs to the urease beta subunit family. As to quaternary structure, heterotrimer of UreA (gamma), UreB (beta) and UreC (alpha) subunits. Three heterotrimers associate to form the active enzyme.

Its subcellular location is the cytoplasm. It catalyses the reaction urea + 2 H2O + H(+) = hydrogencarbonate + 2 NH4(+). It functions in the pathway nitrogen metabolism; urea degradation; CO(2) and NH(3) from urea (urease route): step 1/1. This chain is Urease subunit beta, found in Prochlorococcus marinus (strain MIT 9313).